We begin with the raw amino-acid sequence, 793 residues long: MIKSKDYLVDYNVELALKKEGLTKADYIEICNRLKRSPNRTELGMFGVMWSEHCCYRNSRSLLSNFPTTGKNILVGPGENAGVVDLGEGQRLAFKIESHNHPSAIEPFQGAATGVGGILRDIFTMGARPIALLNSLRFGPLDTPINVGLLEGVVSGIAHYGNCVGVPTVGGEVAFDKSYSGNPLVNAMALGIMETKEIVCSGAKGIDFPVIYVGSTTGRDGMGGASFASSELTQASIDDRPAVQVGDPFLEKGLIEGCLEAFKTGYVVAAQDMGAAGLTCSCSEMAAKGGVGIELDLDLVPAREKNMTAYEFLLSESQERMLFVVEPGKEELIMNKFRKWGLQAKVVGKVLEENIVRVIHEKQIVVNLPADSLAEDTPVNKHELLEEPPGFIKDHWKWDETSLPKVSIKGVHFKENNTILDWNQIILRLLDDPTIASKRWIYNQYDYQVQNNTIIAPGIGDAALIRLREIENQNQNSNRGIAAVVDCPNRWVALDPERGAIAAVAEASRNISCVGAKPLAVTDNLNFSSPEDPIGYWQLAKACKGLSKACVVLETPVTGGNVSLYNETALPNGLKQPIQPTPVVGMIGLIQDINSATRQGWKDQGDQIYLLGTSIDPSILNNQNISLAATSYLENIYGLKTGRPPLIDLEFEKLVQLFLRESIANNLIKSAHDISDGGLVIGLAESCISSGLGIECNLPEIDNRLDKLLFAEGGSRVLVSVSPNNIHNIKNSLNNFNIANSEQISFNYLGTVTDNKYFQININQTKIIDLSVNEITNKFERSIPRRINSTIVS.

Residue His-53 is part of the active site. ATP contacts are provided by Tyr-56 and Lys-95. Mg(2+) is bound at residue Glu-97. Residues 98 to 101 (SHNH) and Arg-120 contribute to the substrate site. His-99 functions as the Proton acceptor in the catalytic mechanism. Asp-121 lines the Mg(2+) pocket. A substrate-binding site is contributed by Gln-244. Residue Asp-272 coordinates Mg(2+). A substrate-binding site is contributed by 316-318 (ESQ). Asp-523 and Gly-560 together coordinate ATP. Residue Asn-561 participates in Mg(2+) binding. Ser-563 contacts substrate.

This sequence belongs to the FGAMS family. Monomer. Part of the FGAM synthase complex composed of 1 PurL, 1 PurQ and 2 PurS subunits.

It localises to the cytoplasm. It catalyses the reaction N(2)-formyl-N(1)-(5-phospho-beta-D-ribosyl)glycinamide + L-glutamine + ATP + H2O = 2-formamido-N(1)-(5-O-phospho-beta-D-ribosyl)acetamidine + L-glutamate + ADP + phosphate + H(+). The protein operates within purine metabolism; IMP biosynthesis via de novo pathway; 5-amino-1-(5-phospho-D-ribosyl)imidazole from N(2)-formyl-N(1)-(5-phospho-D-ribosyl)glycinamide: step 1/2. In terms of biological role, part of the phosphoribosylformylglycinamidine synthase complex involved in the purines biosynthetic pathway. Catalyzes the ATP-dependent conversion of formylglycinamide ribonucleotide (FGAR) and glutamine to yield formylglycinamidine ribonucleotide (FGAM) and glutamate. The FGAM synthase complex is composed of three subunits. PurQ produces an ammonia molecule by converting glutamine to glutamate. PurL transfers the ammonia molecule to FGAR to form FGAM in an ATP-dependent manner. PurS interacts with PurQ and PurL and is thought to assist in the transfer of the ammonia molecule from PurQ to PurL. This Prochlorococcus marinus (strain SARG / CCMP1375 / SS120) protein is Phosphoribosylformylglycinamidine synthase subunit PurL.